A 232-amino-acid chain; its full sequence is Phosphoribosylformylglycinamidine synthase subunit PurQ (232 aa).

The Glutamine amidotransferase type-1 domain maps to 2–232; that stretch reads RIGVITFPGS…SVVRSTLVEA (231 aa). Cysteine 85 serves as the catalytic Nucleophile. Catalysis depends on residues histidine 194 and glutamate 196.

Part of the FGAM synthase complex composed of 1 PurL, 1 PurQ and 2 PurS subunits.

The protein resides in the cytoplasm. It carries out the reaction N(2)-formyl-N(1)-(5-phospho-beta-D-ribosyl)glycinamide + L-glutamine + ATP + H2O = 2-formamido-N(1)-(5-O-phospho-beta-D-ribosyl)acetamidine + L-glutamate + ADP + phosphate + H(+). The enzyme catalyses L-glutamine + H2O = L-glutamate + NH4(+). It functions in the pathway purine metabolism; IMP biosynthesis via de novo pathway; 5-amino-1-(5-phospho-D-ribosyl)imidazole from N(2)-formyl-N(1)-(5-phospho-D-ribosyl)glycinamide: step 1/2. Its function is as follows. Part of the phosphoribosylformylglycinamidine synthase complex involved in the purines biosynthetic pathway. Catalyzes the ATP-dependent conversion of formylglycinamide ribonucleotide (FGAR) and glutamine to yield formylglycinamidine ribonucleotide (FGAM) and glutamate. The FGAM synthase complex is composed of three subunits. PurQ produces an ammonia molecule by converting glutamine to glutamate. PurL transfers the ammonia molecule to FGAR to form FGAM in an ATP-dependent manner. PurS interacts with PurQ and PurL and is thought to assist in the transfer of the ammonia molecule from PurQ to PurL. The chain is Phosphoribosylformylglycinamidine synthase subunit PurQ from Leifsonia xyli subsp. xyli (strain CTCB07).